We begin with the raw amino-acid sequence, 98 residues long: DNA-binding protein Fis (98 aa).

A DNA-binding region (H-T-H motif) is located at residues 74-93 (QTRAAQMMGINRGTLRKKLK).

The protein belongs to the transcriptional regulatory Fis family. As to quaternary structure, homodimer.

Its function is as follows. Activates ribosomal RNA transcription. Plays a direct role in upstream activation of rRNA promoters. In Sodalis glossinidius (strain morsitans), this protein is DNA-binding protein Fis.